The primary structure comprises 313 residues: Probable WRKY transcription factor 41 (313 aa).

A DNA-binding region (WRKY) is located at residues 135-203 (GLEGPHDDIF…YRGTHTCSQG (69 aa)).

This sequence belongs to the WRKY group III family.

It localises to the nucleus. Functionally, transcription factor. Interacts specifically with the W box (5'-(T)TGAC[CT]-3'), a frequently occurring elicitor-responsive cis-acting element. This is Probable WRKY transcription factor 41 (WRKY41) from Arabidopsis thaliana (Mouse-ear cress).